The sequence spans 152 residues: Ubiquitin-conjugating enzyme E2 2 (152 aa).

Residues 4–150 enclose the UBC core domain; it reads PARKRLMRDF…VREVVEQSWT (147 aa). Cys88 (glycyl thioester intermediate) is an active-site residue.

It belongs to the ubiquitin-conjugating enzyme family. Expressed in all tissues examined. Lower levels found in leaves.

It catalyses the reaction S-ubiquitinyl-[E1 ubiquitin-activating enzyme]-L-cysteine + [E2 ubiquitin-conjugating enzyme]-L-cysteine = [E1 ubiquitin-activating enzyme]-L-cysteine + S-ubiquitinyl-[E2 ubiquitin-conjugating enzyme]-L-cysteine.. Its pathway is protein modification; protein ubiquitination. Functionally, accepts the ubiquitin from the E1 complex and catalyzes its covalent attachment to other proteins. The protein is Ubiquitin-conjugating enzyme E2 2 (UBC2) of Arabidopsis thaliana (Mouse-ear cress).